We begin with the raw amino-acid sequence, 396 residues long: KiSS-1 receptor (396 aa).

Topologically, residues 1–46 (MAAEATLGPNVSWWAPSNASGCPGCGVNASDGPGSAPRPLDAWLVP) are extracellular. N-linked (GlcNAc...) asparagine glycans are attached at residues N10, N18, and N28. Residues 47 to 67 (LFFAALMLLGLVGNSLVIFVI) form a helical membrane-spanning segment. Over 68–90 (CRHKHMQTVTNFYIANLAATDVT) the chain is Cytoplasmic. A helical transmembrane segment spans residues 91–111 (FLLCCVPFTALLYPLPTWVLG). Residues 112–120 (DFMCKFVNY) lie on the Extracellular side of the membrane. An intrachain disulfide couples C115 to C191. Residues 121–138 (IQQVSVQATCATLTAMSV) form a helical membrane-spanning segment. Over 139–159 (DRWYVTVFPLRALHRRTPRLA) the chain is Cytoplasmic. The helical transmembrane segment at 160 to 180 (LTVSLSIWVGSAAVSAPVLAL) threads the bilayer. At 181 to 202 (HRLSPGPHTYCSEAFPSRALER) the chain is on the extracellular side. The chain crosses the membrane as a helical span at residues 203-223 (AFALYNLLALYLLPLLATCAC). Residues 224–264 (YGAMLRHLGRAAVRPAPTDGALQGQLLAQRAGAVRTKVSRL) lie on the Cytoplasmic side of the membrane. A helical membrane pass occupies residues 265–285 (VAAVVLLFAACWGPIQLFLVL). Topologically, residues 286–305 (QALGPSGAWHPRSYAAYALK) are extracellular. A helical membrane pass occupies residues 306 to 326 (IWAHCMSYSNSALNPLLYAFL). At 327 to 396 (GSHFRQAFCR…SVQDEHTAPL (70 aa)) the chain is on the cytoplasmic side. Residues 346–396 (RRPHASAHSDRAAPHSVPHSRAAHPVRVRTPEPGNPVRRSPSVQDEHTAPL) form a disordered region.

Belongs to the G-protein coupled receptor 1 family. Highest expression levels in the cerebrum and cecum. Moderate expression in the ovary, colon and placenta. Low levels in the uterus, small intestine, and thymus. Expressed only moderately in the placenta. No expression in kidney tissues. Has a complex and abundant central nervous system expression pattern. Expressed in brain regions such as pons, midbrain, thalamus, hypothalamus, hippocampus, amygdala, cortex, frontal cortex, and striatum. No expression in the cerebellum. Persistent expression is detected in hypothalamus throughout postnatal development, with maximum expression levels at puberty in both male and female. Hypothalamic expression changed throughout the estrus cycle and is significantly increased after gonadectomy, a rise that is prevented by sex steroid replacement both in males and females.

Its subcellular location is the cell membrane. In terms of biological role, receptor for metastin, a C-terminally amidated peptide of KiSS1. KiSS1 is a metastasis suppressor protein. Activation of the receptor inhibits cell proliferation and cell migration, key characteristics of tumor metastasis. The receptor is essential for normal gonadotropin-released hormone physiology and for puberty. The hypothalamic KiSS1/KISS1R system is a pivotal factor in central regulation of the gonadotropic axis at puberty and in adulthood. Analysis of the transduction pathways activated by the receptor identifies coupling to phospholipase C and intracellular calcium release through pertussis toxin-insensitive G(q) proteins. The protein is KiSS-1 receptor (Kiss1r) of Rattus norvegicus (Rat).